The sequence spans 132 residues: Small ribosomal subunit protein uS8 (132 aa).

Belongs to the universal ribosomal protein uS8 family. As to quaternary structure, part of the 30S ribosomal subunit. Contacts proteins S5 and S12.

In terms of biological role, one of the primary rRNA binding proteins, it binds directly to 16S rRNA central domain where it helps coordinate assembly of the platform of the 30S subunit. In Pseudarthrobacter chlorophenolicus (strain ATCC 700700 / DSM 12829 / CIP 107037 / JCM 12360 / KCTC 9906 / NCIMB 13794 / A6) (Arthrobacter chlorophenolicus), this protein is Small ribosomal subunit protein uS8.